Consider the following 107-residue polypeptide: Transcription initiation factor IIA subunit 2-2 (107 aa).

This sequence belongs to the TFIIA subunit 2 family. TFIIA is a heterodimer of the large unprocessed subunit 1 and a small subunit gamma. It was originally believed to be a heterotrimer of an alpha (p30), a beta (p20) and a gamma (p14) subunit.

The protein localises to the nucleus. In terms of biological role, TFIIA is a component of the transcription machinery of RNA polymerase II and plays an important role in transcriptional activation. TFIIA in a complex with TBP mediates transcriptional activity. This chain is Transcription initiation factor IIA subunit 2-2 (TfIIA-S-2), found in Drosophila melanogaster (Fruit fly).